Here is a 194-residue protein sequence, read N- to C-terminus: dITP/XTP pyrophosphatase (194 aa).

8 to 13 (TKNKGK) contacts substrate. Positions 41 and 70 each coordinate Mg(2+). Aspartate 70 acts as the Proton acceptor in catalysis. Residues serine 71, 153-156 (FGYD), lysine 176, and 181-182 (HR) contribute to the substrate site.

This sequence belongs to the HAM1 NTPase family. Homodimer. Requires Mg(2+) as cofactor.

The catalysed reaction is XTP + H2O = XMP + diphosphate + H(+). It catalyses the reaction dITP + H2O = dIMP + diphosphate + H(+). It carries out the reaction ITP + H2O = IMP + diphosphate + H(+). Pyrophosphatase that catalyzes the hydrolysis of nucleoside triphosphates to their monophosphate derivatives, with a high preference for the non-canonical purine nucleotides XTP (xanthosine triphosphate), dITP (deoxyinosine triphosphate) and ITP. Seems to function as a house-cleaning enzyme that removes non-canonical purine nucleotides from the nucleotide pool, thus preventing their incorporation into DNA/RNA and avoiding chromosomal lesions. The protein is dITP/XTP pyrophosphatase of Halalkalibacterium halodurans (strain ATCC BAA-125 / DSM 18197 / FERM 7344 / JCM 9153 / C-125) (Bacillus halodurans).